Reading from the N-terminus, the 256-residue chain is Proteasome subunit alpha (256 aa).

The segment at Leu226–Ser256 is disordered. Residues Gly245–Ser256 are compositionally biased toward basic and acidic residues.

The protein belongs to the peptidase T1A family. As to quaternary structure, the 20S proteasome core is composed of 14 alpha and 14 beta subunits that assemble into four stacked heptameric rings, resulting in a barrel-shaped structure. The two inner rings, each composed of seven catalytic beta subunits, are sandwiched by two outer rings, each composed of seven alpha subunits. The catalytic chamber with the active sites is on the inside of the barrel. Has a gated structure, the ends of the cylinder being occluded by the N-termini of the alpha-subunits. Is capped by the proteasome-associated ATPase, ARC.

The protein resides in the cytoplasm. It participates in protein degradation; proteasomal Pup-dependent pathway. With respect to regulation, the formation of the proteasomal ATPase ARC-20S proteasome complex, likely via the docking of the C-termini of ARC into the intersubunit pockets in the alpha-rings, may trigger opening of the gate for substrate entry. Interconversion between the open-gate and close-gate conformations leads to a dynamic regulation of the 20S proteasome proteolysis activity. Component of the proteasome core, a large protease complex with broad specificity involved in protein degradation. The protein is Proteasome subunit alpha of Saccharopolyspora erythraea (strain ATCC 11635 / DSM 40517 / JCM 4748 / NBRC 13426 / NCIMB 8594 / NRRL 2338).